Consider the following 467-residue polypeptide: Protein PHOSPHATE STARVATION RESPONSE 3 (467 aa).

Residues 227-266 (MSLPVSSCSDQEDLQDARSPAKVQLSSSRSSSGTASCNKP) form a disordered region. One can recognise an HTH myb-type domain in the interval 262-322 (SCNKPRLRWT…HLQKYRLAKY (61 aa)). Positions 293–318 (PKGVLKLMKVEGLTIYHIKSHLQKYR) form a DNA-binding region, H-T-H motif. Residues 327 to 337 (KEDKKQEEKKT) are compositionally biased toward basic and acidic residues. Disordered regions lie at residues 327-353 (KEDK…KSAQ) and 400-467 (RESI…VHDE). Residues 402 to 412 (SISSMTSTTEG) are compositionally biased toward polar residues. Composition is skewed to basic and acidic residues over residues 419 to 428 (PMEKTEDKAE) and 438 to 467 (RITD…VHDE).

The protein resides in the nucleus. Functionally, transcription factor involved in phosphate starvation signaling. Binds to P1BS, an imperfect palindromic sequence 5'-GNATATNC-3', to promote the expression of inorganic phosphate (Pi) starvation-responsive genes. Functionally redundant with PHR1 and PHR2 in regulating Pi starvation response and Pi homeostasis. This Oryza sativa subsp. indica (Rice) protein is Protein PHOSPHATE STARVATION RESPONSE 3.